Consider the following 298-residue polypeptide: 4-hydroxy-tetrahydrodipicolinate synthase (298 aa).

A pyruvate-binding site is contributed by Thr48. Residue Tyr137 is the Proton donor/acceptor of the active site. Lys166 acts as the Schiff-base intermediate with substrate in catalysis. Ile207 is a pyruvate binding site.

Belongs to the DapA family. As to quaternary structure, homotetramer; dimer of dimers.

The protein resides in the cytoplasm. It carries out the reaction L-aspartate 4-semialdehyde + pyruvate = (2S,4S)-4-hydroxy-2,3,4,5-tetrahydrodipicolinate + H2O + H(+). The protein operates within amino-acid biosynthesis; L-lysine biosynthesis via DAP pathway; (S)-tetrahydrodipicolinate from L-aspartate: step 3/4. Its function is as follows. Catalyzes the condensation of (S)-aspartate-beta-semialdehyde [(S)-ASA] and pyruvate to 4-hydroxy-tetrahydrodipicolinate (HTPA). This is 4-hydroxy-tetrahydrodipicolinate synthase from Campylobacter jejuni subsp. jejuni serotype O:2 (strain ATCC 700819 / NCTC 11168).